A 321-amino-acid chain; its full sequence is Lipoyl synthase (321 aa).

7 residues coordinate [4Fe-4S] cluster: Cys68, Cys73, Cys79, Cys94, Cys98, Cys101, and Ser308. In terms of domain architecture, Radical SAM core spans 80 to 297 (FNHGTATFMI…KAEAMAMGFT (218 aa)).

Belongs to the radical SAM superfamily. Lipoyl synthase family. [4Fe-4S] cluster serves as cofactor.

The protein localises to the cytoplasm. It carries out the reaction [[Fe-S] cluster scaffold protein carrying a second [4Fe-4S](2+) cluster] + N(6)-octanoyl-L-lysyl-[protein] + 2 oxidized [2Fe-2S]-[ferredoxin] + 2 S-adenosyl-L-methionine + 4 H(+) = [[Fe-S] cluster scaffold protein] + N(6)-[(R)-dihydrolipoyl]-L-lysyl-[protein] + 4 Fe(3+) + 2 hydrogen sulfide + 2 5'-deoxyadenosine + 2 L-methionine + 2 reduced [2Fe-2S]-[ferredoxin]. The protein operates within protein modification; protein lipoylation via endogenous pathway; protein N(6)-(lipoyl)lysine from octanoyl-[acyl-carrier-protein]: step 2/2. Functionally, catalyzes the radical-mediated insertion of two sulfur atoms into the C-6 and C-8 positions of the octanoyl moiety bound to the lipoyl domains of lipoate-dependent enzymes, thereby converting the octanoylated domains into lipoylated derivatives. The protein is Lipoyl synthase of Yersinia pseudotuberculosis serotype O:1b (strain IP 31758).